The sequence spans 65 residues: Subtilisin inhibitor CLSI-I (65 aa).

The protein belongs to the protease inhibitor I13 (potato type I serine protease inhibitor) family.

Its function is as follows. Inhibits subtilisin-type microbial serine proteases including proteinase K, subtilisin BPN', subtilisin Carlsberg, subtilisin E, A.oryzae protease and S.griseus alkaline protease. Weakly inhibits pronase E. Does not inhibit trypsin or chymotrypsin. The chain is Subtilisin inhibitor CLSI-I from Canavalia lineata (Beach bean).